Here is a 234-residue protein sequence, read N- to C-terminus: Large ribosomal subunit protein uL1 (234 aa).

It belongs to the universal ribosomal protein uL1 family. In terms of assembly, part of the 50S ribosomal subunit.

Its function is as follows. Binds directly to 23S rRNA. The L1 stalk is quite mobile in the ribosome, and is involved in E site tRNA release. Protein L1 is also a translational repressor protein, it controls the translation of the L11 operon by binding to its mRNA. In Anaeromyxobacter sp. (strain Fw109-5), this protein is Large ribosomal subunit protein uL1.